A 409-amino-acid chain; its full sequence is Na(+)-translocating NADH-quinone reductase subunit F (409 aa).

A helical membrane pass occupies residues 5 to 25 (FIFGIGAFTAIVLVLAVVILI). A 2Fe-2S ferredoxin-type domain is found at 34 to 128 (GDITISINDD…SMDVELPEEV (95 aa)). [2Fe-2S] cluster-binding residues include cysteine 71, cysteine 77, cysteine 80, and cysteine 112. An FAD-binding FR-type domain is found at 131–271 (VKKWECTVIS…SGPFGEFFAK (141 aa)).

It belongs to the NqrF family. In terms of assembly, composed of six subunits; NqrA, NqrB, NqrC, NqrD, NqrE and NqrF. [2Fe-2S] cluster serves as cofactor. The cofactor is FAD.

It is found in the cell inner membrane. It catalyses the reaction a ubiquinone + n Na(+)(in) + NADH + H(+) = a ubiquinol + n Na(+)(out) + NAD(+). NQR complex catalyzes the reduction of ubiquinone-1 to ubiquinol by two successive reactions, coupled with the transport of Na(+) ions from the cytoplasm to the periplasm. The first step is catalyzed by NqrF, which accepts electrons from NADH and reduces ubiquinone-1 to ubisemiquinone by a one-electron transfer pathway. In Actinobacillus succinogenes (strain ATCC 55618 / DSM 22257 / CCUG 43843 / 130Z), this protein is Na(+)-translocating NADH-quinone reductase subunit F.